A 396-amino-acid chain; its full sequence is Acetate kinase (396 aa).

A Mg(2+)-binding site is contributed by N6. An ATP-binding site is contributed by K13. R89 serves as a coordination point for substrate. The active-site Proton donor/acceptor is the D145. Residues 205–209 (HLGNG), 280–282 (DMR), and 329–333 (GVGEN) each bind ATP. Position 383 (E383) interacts with Mg(2+).

The protein belongs to the acetokinase family. Homodimer. Requires Mg(2+) as cofactor. It depends on Mn(2+) as a cofactor.

The protein localises to the cytoplasm. The enzyme catalyses acetate + ATP = acetyl phosphate + ADP. The protein operates within metabolic intermediate biosynthesis; acetyl-CoA biosynthesis; acetyl-CoA from acetate: step 1/2. Catalyzes the formation of acetyl phosphate from acetate and ATP. Can also catalyze the reverse reaction. The sequence is that of Acetate kinase from Mesoplasma florum (strain ATCC 33453 / NBRC 100688 / NCTC 11704 / L1) (Acholeplasma florum).